Reading from the N-terminus, the 158-residue chain is Arginine repressor (158 aa).

The protein belongs to the ArgR family.

The protein resides in the cytoplasm. Its pathway is amino-acid biosynthesis; L-arginine biosynthesis [regulation]. Functionally, regulates arginine biosynthesis genes. In Phocaeicola vulgatus (strain ATCC 8482 / DSM 1447 / JCM 5826 / CCUG 4940 / NBRC 14291 / NCTC 11154) (Bacteroides vulgatus), this protein is Arginine repressor.